The sequence spans 178 residues: Ribosome maturation factor RimM (178 aa).

Residues A101–F178 enclose the PRC barrel domain.

This sequence belongs to the RimM family. Binds ribosomal protein uS19.

The protein resides in the cytoplasm. Its function is as follows. An accessory protein needed during the final step in the assembly of 30S ribosomal subunit, possibly for assembly of the head region. Essential for efficient processing of 16S rRNA. May be needed both before and after RbfA during the maturation of 16S rRNA. It has affinity for free ribosomal 30S subunits but not for 70S ribosomes. This is Ribosome maturation factor RimM from Pseudomonas putida (strain ATCC 700007 / DSM 6899 / JCM 31910 / BCRC 17059 / LMG 24140 / F1).